A 594-amino-acid polypeptide reads, in one-letter code: Gamma-terpinene synthase, chloroplastic (594 aa).

The transit peptide at 1–44 (MATLSMQVSILSKEVKNVNNIGMRASKPMVARRVSTTRLRPICS) directs the protein to the chloroplast. Positions 347 and 351 each coordinate Mn(2+). The DDXXD motif signature appears at 347-351 (DDVYD). Homodimerization regions lie at residues 353–359 (YGTLDEL) and 425–462 (EAKW…FTLP). Residues Asp491 and Glu499 each coordinate Mn(2+).

It belongs to the terpene synthase family. As to quaternary structure, homodimer. Mn(2+) is required as a cofactor. Mg(2+) serves as cofactor. In terms of tissue distribution, expressed in peltate glandular trichomes.

Its subcellular location is the plastid. The protein resides in the chloroplast. The catalysed reaction is (2E)-geranyl diphosphate = gamma-terpinene + diphosphate. It carries out the reaction (2E)-geranyl diphosphate = alpha-terpinene + diphosphate. It participates in secondary metabolite biosynthesis; terpenoid biosynthesis. Involved in the biosynthesis of phenolic monoterpenes natural products thymol and carvacrol which have a broad range of biological activities acting as antimicrobial compounds, insecticides, antioxidants and pharmaceutical agents. Monoterpene synthase which catalyzes the conversion of geranyl diphosphate (GPP) to gamma-terpinene and the minor products alpha-thujene, alpha-terpinene, myrcene, sabinene, (+)-R-limonene, alpha-pinene and alpha-phellandrene. The chain is Gamma-terpinene synthase, chloroplastic from Origanum vulgare (Wild marjoram).